A 383-amino-acid chain; its full sequence is Anhydro-N-acetylmuramic acid kinase (383 aa).

9-16 serves as a coordination point for ATP; that stretch reads GTSVDSID.

It belongs to the anhydro-N-acetylmuramic acid kinase family.

It carries out the reaction 1,6-anhydro-N-acetyl-beta-muramate + ATP + H2O = N-acetyl-D-muramate 6-phosphate + ADP + H(+). Its pathway is amino-sugar metabolism; 1,6-anhydro-N-acetylmuramate degradation. It functions in the pathway cell wall biogenesis; peptidoglycan recycling. In terms of biological role, catalyzes the specific phosphorylation of 1,6-anhydro-N-acetylmuramic acid (anhMurNAc) with the simultaneous cleavage of the 1,6-anhydro ring, generating MurNAc-6-P. Is required for the utilization of anhMurNAc either imported from the medium or derived from its own cell wall murein, and thus plays a role in cell wall recycling. The polypeptide is Anhydro-N-acetylmuramic acid kinase (Crocosphaera subtropica (strain ATCC 51142 / BH68) (Cyanothece sp. (strain ATCC 51142))).